A 365-amino-acid polypeptide reads, in one-letter code: Phosphate acyltransferase (365 aa).

Belongs to the PlsX family. As to quaternary structure, homodimer. Probably interacts with PlsY.

It localises to the cytoplasm. It catalyses the reaction a fatty acyl-[ACP] + phosphate = an acyl phosphate + holo-[ACP]. Its pathway is lipid metabolism; phospholipid metabolism. Its function is as follows. Catalyzes the reversible formation of acyl-phosphate (acyl-PO(4)) from acyl-[acyl-carrier-protein] (acyl-ACP). This enzyme utilizes acyl-ACP as fatty acyl donor, but not acyl-CoA. The protein is Phosphate acyltransferase of Klebsiella pneumoniae subsp. pneumoniae (strain ATCC 700721 / MGH 78578).